Consider the following 282-residue polypeptide: Cholesterol 25-hydroxylase-like protein 1, member 1 (282 aa).

A glycan (N-linked (GlcNAc...) asparagine) is linked at asparagine 3. A run of 3 helical transmembrane segments spans residues 40–60 (FFPV…FAVL), 85–107 (MLRT…VLIT), and 127–147 (FSGG…WHMV). The 133-residue stretch at 133 to 265 (ALLVFDTQYF…FSHWDKIFGT (133 aa)) folds into the Fatty acid hydroxylase domain. A Histidine box-1 motif is present at residues 144–148 (WHMVH). The Histidine box-2 signature appears at 159–163 (HAIHH). The Histidine box-3 signature appears at 240–246 (AHDMHHQ).

It belongs to the sterol desaturase family. Requires Fe cation as cofactor.

Its subcellular location is the endoplasmic reticulum membrane. In terms of biological role, may catalyze the formation of 25-hydroxycholesterol from cholesterol. This Danio rerio (Zebrafish) protein is Cholesterol 25-hydroxylase-like protein 1, member 1 (ch25hl1.1).